The primary structure comprises 645 residues: E3 ubiquitin-protein ligase ORTHRUS 2 (645 aa).

The PHD-type zinc finger occupies 12 to 63 (DGVCMRCKSNPPPEESLTCGTCVTPWHVSCLSSPPKTLASTLQWHCPDCSGE). The interval 96–133 (LSTEEKAKMRQRLLSGKGVEEDDEEEKRKKKGKGKNPN) is disordered. Residues 146-185 (CSFCMQLPERPVTKPCGHNACLKCFEKWMGQGKRTCGKCR) form an RING-type 1 zinc finger. Residues 273 to 422 (VRNQGLLVGE…FKVCRYLFVR (150 aa)) form the YDG domain. Residues 518–575 (CQICQQVLTLPVTTPCAHNFCKACLEAKFAGKTLVRERSTGGRTLRSRKNVLNCPCCP) form an RING-type 2 zinc finger. Residues 583–613 (QNPQVNREVAEVIEKLKTQEEDTAELEDEDE) adopt a coiled-coil conformation. The interval 599-645 (KTQEEDTAELEDEDEGECSGTTPEEDSEQPKKRIKLDTDATVSATIR) is disordered. The span at 603–625 (EDTAELEDEDEGECSGTTPEEDS) shows a compositional bias: acidic residues. The span at 626 to 636 (EQPKKRIKLDT) shows a compositional bias: basic and acidic residues.

In terms of assembly, interacts with histones CENH3, HTB2, HTR3 and H4. As to expression, mostly expressed in inflorescence and, to a lower extent, in leaves.

The protein resides in the nucleus. It carries out the reaction S-ubiquitinyl-[E2 ubiquitin-conjugating enzyme]-L-cysteine + [acceptor protein]-L-lysine = [E2 ubiquitin-conjugating enzyme]-L-cysteine + N(6)-ubiquitinyl-[acceptor protein]-L-lysine.. The protein operates within protein modification; protein ubiquitination. Its function is as follows. E3 ubiquitin-protein ligase. Participates in CpG methylation-dependent transcriptional regulation and epigenetic transcriptional silencing. Mediates ubiquitination with the E2 ubiquitin-conjugating enzyme UBC11. Promotes methylation-mediated gene silencing leading, for example, to early flowering. Associates with methylated DNA, and can bind to CpG, CpNpG, and CpNpN DNA motifs, with a strong preference for methylated forms, and with highest affinity for CpG substrate. Probably acts at the DNA methylation?histone interface to maintain centromeric heterochromatin. This Arabidopsis thaliana (Mouse-ear cress) protein is E3 ubiquitin-protein ligase ORTHRUS 2 (ORTH2).